A 252-amino-acid polypeptide reads, in one-letter code: Mannose-P-dolichol utilization defect 1 protein homolog (252 aa).

The PQ-loop 1 domain maps to 34-100 (KALLSKGLGL…HGYPFSAWGD (67 aa)). 7 helical membrane passes run 41–61 (LGLA…LKIL), 69–89 (INIV…SYNF), 98–118 (WGDS…VLFF), 126–146 (GLFL…LTPM), 148–168 (VLFT…LSQA), 180–200 (LSAA…FTSI), and 207–227 (MIIL…GQLI). A PQ-loop 2 domain is found at 157-211 (IPILLVGKLSQAYTNYQAGSTGQLSAATVIMMFAGSVARIFTSIQETGDFMIILT).

Belongs to the MPDU1 (TC 2.A.43.3) family.

It is found in the membrane. The polypeptide is Mannose-P-dolichol utilization defect 1 protein homolog (Drosophila melanogaster (Fruit fly)).